A 158-amino-acid chain; its full sequence is Large ribosomal subunit protein uL30 (158 aa).

It belongs to the universal ribosomal protein uL30 family. In terms of assembly, part of the 50S ribosomal subunit.

The sequence is that of Large ribosomal subunit protein uL30 from Saccharolobus islandicus (strain Y.G.57.14 / Yellowstone #1) (Sulfolobus islandicus).